The chain runs to 418 residues: Tyrosine--tRNA ligase (418 aa).

Tyrosine 34 contributes to the L-tyrosine binding site. Positions 39–48 (PTGDSMHIGH) match the 'HIGH' region motif. L-tyrosine is bound by residues tyrosine 166 and glutamine 170. A 'KMSKS' region motif is present at residues 228-232 (KFGKT). Lysine 231 is a binding site for ATP. Residues 350 to 417 (TNIVELLTET…KKNYFLAKVK (68 aa)) enclose the S4 RNA-binding domain.

Belongs to the class-I aminoacyl-tRNA synthetase family. TyrS type 1 subfamily. Homodimer.

The protein localises to the cytoplasm. It catalyses the reaction tRNA(Tyr) + L-tyrosine + ATP = L-tyrosyl-tRNA(Tyr) + AMP + diphosphate + H(+). Its function is as follows. Catalyzes the attachment of tyrosine to tRNA(Tyr) in a two-step reaction: tyrosine is first activated by ATP to form Tyr-AMP and then transferred to the acceptor end of tRNA(Tyr). This chain is Tyrosine--tRNA ligase, found in Levilactobacillus brevis (Lactobacillus brevis).